A 462-amino-acid chain; its full sequence is Asparagine--tRNA ligase (462 aa).

The protein belongs to the class-II aminoacyl-tRNA synthetase family. Homodimer.

It localises to the cytoplasm. It catalyses the reaction tRNA(Asn) + L-asparagine + ATP = L-asparaginyl-tRNA(Asn) + AMP + diphosphate + H(+). The sequence is that of Asparagine--tRNA ligase from Borreliella burgdorferi (strain ATCC 35210 / DSM 4680 / CIP 102532 / B31) (Borrelia burgdorferi).